A 308-amino-acid polypeptide reads, in one-letter code: Apolipoprotein E (308 aa).

A signal peptide spans M1 to A18. Repeat copies occupy residues L75–G96, P97–E118, S119–G140, Q141–L162, R163–E184, R185–I206, P207–R224, and G225–E246. An 8 X 22 AA approximate tandem repeats region spans residues L75 to E246. The tract at residues H153 to R163 is LDL and other lipoprotein receptors binding. Residue L157–R160 coordinates heparin. The lipid-binding and lipoprotein association stretch occupies residues A205–M281. G220–L227 is a binding site for heparin. Residues S257–K308 are homooligomerization. A specificity for association with VLDL region spans residues R269–M281.

The protein belongs to the apolipoprotein A1/A4/E family. In terms of assembly, homotetramer. May interact with ABCA1; functionally associated with ABCA1 in the biogenesis of HDLs. May interact with APP/A4 amyloid-beta peptide; the interaction is extremely stable in vitro but its physiological significance is unclear. May interact with MAPT. May interact with MAP2. In the cerebrospinal fluid, interacts with secreted SORL1. Interacts with PMEL; this allows the loading of PMEL luminal fragment on ILVs to induce fibril nucleation. APOE exists as multiple glycosylated and sialylated glycoforms within cells and in plasma. The extent of glycosylation and sialylation are tissue and context specific. Post-translationally, glycated in plasma VLDL. In terms of processing, phosphorylated by FAM20C in the extracellular medium.

It is found in the secreted. The protein localises to the extracellular space. It localises to the extracellular matrix. The protein resides in the extracellular vesicle. Its subcellular location is the endosome. It is found in the multivesicular body. In terms of biological role, APOE is an apolipoprotein, a protein associating with lipid particles, that mainly functions in lipoprotein-mediated lipid transport between organs via the plasma and interstitial fluids. APOE is a core component of plasma lipoproteins and is involved in their production, conversion and clearance. Apolipoproteins are amphipathic molecules that interact both with lipids of the lipoprotein particle core and the aqueous environment of the plasma. As such, APOE associates with chylomicrons, chylomicron remnants, very low density lipoproteins (VLDL) and intermediate density lipoproteins (IDL) but shows a preferential binding to high-density lipoproteins (HDL). It also binds a wide range of cellular receptors including the LDL receptor/LDLR and the very low-density lipoprotein receptor/VLDLR that mediate the cellular uptake of the APOE-containing lipoprotein particles. Finally, APOE also has a heparin-binding activity and binds heparan-sulfate proteoglycans on the surface of cells, a property that supports the capture and the receptor-mediated uptake of APOE-containing lipoproteins by cells. The protein is Apolipoprotein E (APOE) of Pteropus vampyrus (Large flying fox).